Consider the following 399-residue polypeptide: Probable aspartate/prephenate aminotransferase (399 aa).

Residues Gly39, Trp125, and Asn175 each contribute to the L-aspartate site. An N6-(pyridoxal phosphate)lysine modification is found at Lys239. Arg375 serves as a coordination point for L-aspartate.

It belongs to the class-I pyridoxal-phosphate-dependent aminotransferase family. In terms of assembly, homodimer. Pyridoxal 5'-phosphate serves as cofactor.

The protein resides in the cytoplasm. It catalyses the reaction L-aspartate + 2-oxoglutarate = oxaloacetate + L-glutamate. The enzyme catalyses L-arogenate + 2-oxoglutarate = prephenate + L-glutamate. Functionally, catalyzes the reversible conversion of aspartate and 2-oxoglutarate to glutamate and oxaloacetate. Can also transaminate prephenate in the presence of glutamate. The chain is Probable aspartate/prephenate aminotransferase (aatA) from Rickettsia bellii (strain RML369-C).